Reading from the N-terminus, the 284-residue chain is GPN-loop GTPase 3 (284 aa).

A GTP-binding site is contributed by 13–18; the sequence is GSGKST. A Gly-Pro-Asn (GPN)-loop; involved in dimer interface motif is present at residues 72–74; the sequence is GPN. Residue 174–177 participates in GTP binding; it reads TKMD. The segment at 261 to 284 is disordered; the sequence is KEPKEHEEESSSMFDEYFQERQNE.

Belongs to the GPN-loop GTPase family. Heterodimer with GPN1. Binds to RNA polymerase II (RNAPII). Interacts directly with subunits RPB4 and RPB7 and the CTD of RPB1.

Its function is as follows. Small GTPase required for proper localization of RNA polymerase II (RNAPII). May act at an RNAP assembly step prior to nuclear import. This chain is GPN-loop GTPase 3, found in Rattus norvegicus (Rat).